Consider the following 357-residue polypeptide: Phosphoribosylformylglycinamidine cyclo-ligase (357 aa).

This sequence belongs to the AIR synthase family.

The protein localises to the cytoplasm. The catalysed reaction is 2-formamido-N(1)-(5-O-phospho-beta-D-ribosyl)acetamidine + ATP = 5-amino-1-(5-phospho-beta-D-ribosyl)imidazole + ADP + phosphate + H(+). It functions in the pathway purine metabolism; IMP biosynthesis via de novo pathway; 5-amino-1-(5-phospho-D-ribosyl)imidazole from N(2)-formyl-N(1)-(5-phospho-D-ribosyl)glycinamide: step 2/2. This chain is Phosphoribosylformylglycinamidine cyclo-ligase, found in Agrobacterium fabrum (strain C58 / ATCC 33970) (Agrobacterium tumefaciens (strain C58)).